The following is a 490-amino-acid chain: MNLAEICDNAKKGREYALLGNYDSSMVYYQGVMQQIQRHCQSVRDPAIKGKWQQVRQELLEEYEQVKSIVSTLESFKIDKPPDFPVSCQDEPFRDPAVWPPPVPAEHRAPPQIRRPNREVRPLRKEMAGVGARGPVGRAHPISKSEKPSTSRDKDYRARGRDDKGRKNMQDGASDGEMPKFDGAGYDKDLVEALERDIVSRNPSIHWDDIADLEEAKKLLREAVVLPMWMPDFFKGIRRPWKGVLMVGPPGTGKTMLAKAVATECGTTFFNVSSSTLTSKYRGESEKLVRLLFEMARFYAPTTIFIDEIDSICSRRGTSDEHEASRRVKSELLIQMDGVGGALENDDPSKMVMVLAATNFPWDIDEALRRRLEKRIYIPLPTAKGRAELLKINLREVELDPDIQLEDIAEKIEGYSGADITNVCRDASLMAMRRRINGLSPEEIRALSKEELQMPVTKGDFELALKKIAKSVSAADLEKYEKWMVEFGSA.

Met-1 is subject to N-acetylmethionine. A disordered region spans residues 95 to 184 (DPAVWPPPVP…DGEMPKFDGA (90 aa)). Over residues 116–127 (PNREVRPLRKEM) the composition is skewed to basic and acidic residues. Over residues 128 to 139 (AGVGARGPVGRA) the composition is skewed to low complexity. The segment covering 143-169 (SKSEKPSTSRDKDYRARGRDDKGRKNM) has biased composition (basic and acidic residues). Ser-174 carries the phosphoserine modification. 248–255 (GPPGTGKT) is a binding site for ATP.

The protein belongs to the AAA ATPase family. Katanin p60 subunit A1 subfamily. A-like 1 sub-subfamily. In terms of assembly, interacts with KATNB1 and KATNBL1. In terms of tissue distribution, expressed in testis, restricted to Sertoli cells (at protein level).

The protein resides in the cytoplasm. Its subcellular location is the cytoskeleton. The protein localises to the spindle pole. It is found in the spindle. It carries out the reaction n ATP + n H2O + a microtubule = n ADP + n phosphate + (n+1) alpha/beta tubulin heterodimers.. Functionally, regulates microtubule dynamics in Sertoli cells, a process that is essential for spermiogenesis and male fertility. Severs microtubules in an ATP-dependent manner, promoting rapid reorganization of cellular microtubule arrays. Has microtubule-severing activity in vitro. In Homo sapiens (Human), this protein is Katanin p60 ATPase-containing subunit A-like 1.